We begin with the raw amino-acid sequence, 297 residues long: 5'-3' exonuclease (297 aa).

In terms of domain architecture, 5'-3' exonuclease spans 171 to 262 (EPDQIVDFKA…MKLEKELFAI (92 aa)).

5'-3' exonuclease acting preferentially on double-stranded DNA. The sequence is that of 5'-3' exonuclease (polA) from Mycoplasmopsis pulmonis (strain UAB CTIP) (Mycoplasma pulmonis).